Here is an 800-residue protein sequence, read N- to C-terminus: Nuclear cap-binding protein subunit 1 (800 aa).

The interval 1–26 (MSRRRAHDTEDEGYDHRRNKRRRVSE) is disordered. Threonine 9 is subject to Phosphothreonine. The MIF4G domain occupies 31–243 (EDRLESLILR…CLWAQIRKLR (213 aa)). The tract at residues 669 to 704 (LSKADSSSSESDEDAPTKRKKPITHADKPSEEAVER) is disordered. Residues 692–704 (THADKPSEEAVER) show a composition bias toward basic and acidic residues.

The protein belongs to the NCBP1 family. In terms of assembly, component of the nuclear cap-binding complex (CBC), a heterodimer composed of Cbp80 and Cbp20 that interacts with m7GpppG-capped RNA.

The protein resides in the nucleus. Component of the cap-binding complex (CBC), which binds cotranscriptionally to the 5'-cap of pre-mRNAs and is involved in various processes such as pre-mRNA splicing and RNA-mediated gene silencing (RNAi). The CBC complex is involved in miRNA-mediated RNA interference via its interaction with Ars2 and is required for primary microRNAs (miRNAs) processing. Also involved in innate immunity via the short interfering RNAs (siRNAs) processing machinery by restricting the viral RNA production. In the CBC complex, Cbp80 does not bind directly capped RNAs (m7GpppG-capped RNA) but is required to stabilize the movement of the N-terminal loop of Cbp20 and lock the CBC into a high affinity cap-binding state with the cap structure. The sequence is that of Nuclear cap-binding protein subunit 1 (Cbp80) from Drosophila persimilis (Fruit fly).